The sequence spans 431 residues: Serine/threonine-protein kinase SSN3 (431 aa).

Residues 27-355 (YQIIGYIAAG…ADNALVHPYF (329 aa)) form the Protein kinase domain. ATP is bound by residues 33 to 41 (IAAGTYGKV) and Lys59. Asp174 serves as the catalytic Proton acceptor. The segment at 397–431 (RHGGAYDDQHNNSNNNTNNSLNANNANNVPRKRAR) is disordered. Residues 407 to 424 (NNSNNNTNNSLNANNANN) are compositionally biased toward low complexity.

The protein belongs to the protein kinase superfamily. CMGC Ser/Thr protein kinase family. CDC2/CDKX subfamily. As to quaternary structure, component of the srb8-11 complex, a regulatory module of the Mediator complex. The cofactor is Mg(2+).

The protein localises to the nucleus. It carries out the reaction L-seryl-[protein] + ATP = O-phospho-L-seryl-[protein] + ADP + H(+). It catalyses the reaction L-threonyl-[protein] + ATP = O-phospho-L-threonyl-[protein] + ADP + H(+). The catalysed reaction is [DNA-directed RNA polymerase] + ATP = phospho-[DNA-directed RNA polymerase] + ADP + H(+). Functionally, component of the srb8-11 complex. The srb8-11 complex is a regulatory module of the Mediator complex which is itself dependent transcription. The srb8-11 complex may be involved in the transcriptional repression of a subset of genes regulated by Mediator. It may inhibit the association of the Mediator complex with RNA polymerase II to form the holoenzyme complex. The srb8-11 complex phosphorylates the C-terminal domain (CTD) of the largest subunit of RNA polymerase II. In Scheffersomyces stipitis (strain ATCC 58785 / CBS 6054 / NBRC 10063 / NRRL Y-11545) (Yeast), this protein is Serine/threonine-protein kinase SSN3 (SSN3).